Consider the following 95-residue polypeptide: Nucleoid-associated protein MMOB0740 (95 aa).

It belongs to the YbaB/EbfC family. Homodimer.

Its subcellular location is the cytoplasm. The protein localises to the nucleoid. Binds to DNA and alters its conformation. May be involved in regulation of gene expression, nucleoid organization and DNA protection. This chain is Nucleoid-associated protein MMOB0740, found in Mycoplasma mobile (strain ATCC 43663 / 163K / NCTC 11711) (Mesomycoplasma mobile).